Reading from the N-terminus, the 89-residue chain is Small ribosomal subunit protein uS15 (89 aa).

It belongs to the universal ribosomal protein uS15 family. In terms of assembly, part of the 30S ribosomal subunit. Forms a bridge to the 50S subunit in the 70S ribosome, contacting the 23S rRNA.

Its function is as follows. One of the primary rRNA binding proteins, it binds directly to 16S rRNA where it helps nucleate assembly of the platform of the 30S subunit by binding and bridging several RNA helices of the 16S rRNA. In terms of biological role, forms an intersubunit bridge (bridge B4) with the 23S rRNA of the 50S subunit in the ribosome. The protein is Small ribosomal subunit protein uS15 of Buchnera aphidicola subsp. Baizongia pistaciae (strain Bp).